The sequence spans 350 residues: Phosphotriesterase-related protein (350 aa).

His-22, His-24, Glu-169, His-201, His-230, and Asp-298 together coordinate a divalent metal cation.

It belongs to the metallo-dependent hydrolases superfamily. Phosphotriesterase family. Requires a divalent metal cation as cofactor.

This Drosophila ananassae (Fruit fly) protein is Phosphotriesterase-related protein.